Here is a 297-residue protein sequence, read N- to C-terminus: N-acetylneuraminate lyase (297 aa).

Positions 47 and 48 each coordinate aceneuramate. Tyr137 serves as the catalytic Proton donor. Lys165 acts as the Schiff-base intermediate with substrate in catalysis. Aceneuramate is bound by residues Thr167, Gly189, Asp191, Glu192, and Ser208.

Belongs to the DapA family. NanA subfamily. Homotetramer.

The protein localises to the cytoplasm. The catalysed reaction is aceneuramate = aldehydo-N-acetyl-D-mannosamine + pyruvate. It functions in the pathway amino-sugar metabolism; N-acetylneuraminate degradation; D-fructose 6-phosphate from N-acetylneuraminate: step 1/5. In terms of biological role, catalyzes the reversible aldol cleavage of N-acetylneuraminic acid (sialic acid; Neu5Ac) to form pyruvate and N-acetylmannosamine (ManNAc) via a Schiff base intermediate. This chain is N-acetylneuraminate lyase, found in Salmonella choleraesuis (strain SC-B67).